Consider the following 222-residue polypeptide: Putative N-acetylmannosamine-6-phosphate 2-epimerase (222 aa).

The protein belongs to the NanE family.

The enzyme catalyses an N-acyl-D-glucosamine 6-phosphate = an N-acyl-D-mannosamine 6-phosphate. Its pathway is amino-sugar metabolism; N-acetylneuraminate degradation; D-fructose 6-phosphate from N-acetylneuraminate: step 3/5. Its function is as follows. Converts N-acetylmannosamine-6-phosphate (ManNAc-6-P) to N-acetylglucosamine-6-phosphate (GlcNAc-6-P). The chain is Putative N-acetylmannosamine-6-phosphate 2-epimerase from Staphylococcus saprophyticus subsp. saprophyticus (strain ATCC 15305 / DSM 20229 / NCIMB 8711 / NCTC 7292 / S-41).